A 467-amino-acid chain; its full sequence is Nuclear distribution protein nudF (467 aa).

The LisH domain occupies 9-41 (QAEELHKSIIAYLASVNLTESSAALRAELGDSV). A coiled-coil region spans residues 60 to 87 (TSVVRLQKKIMDLESRCAALQSELDSAT). WD repeat units follow at residues 113 to 154 (GHRN…RTVK), 156 to 196 (HTKA…KNIR), 200 to 247 (GHDH…CVKT), 250 to 289 (GHVD…TKST), 292 to 352 (GHEH…IKTL), 354 to 393 (GHDN…KCVR), 398 to 428 (AHGH…NGTP), and 429 to 466 (AATS…RIFA). The disordered stretch occupies residues 417 to 439 (GANGEAETNGTPAATSTTNGVRP). Positions 422–436 (AETNGTPAATSTTNG) are enriched in polar residues.

Belongs to the WD repeat LIS1/nudF family. As to quaternary structure, self-associates. Interacts with nudE and dynein.

It is found in the cytoplasm. The protein resides in the cytoskeleton. The protein localises to the spindle pole. Functionally, positively regulates the activity of the minus-end directed microtubule motor protein dynein. May enhance dynein-mediated microtubule sliding by targeting dynein to the microtubule plus end. Required for nuclear migration during vegetative growth as well as development. Required for retrograde early endosome (EE) transport from the hyphal tip. Required for localization of dynein to the mitotic spindle poles. Recruits additional proteins to the dynein complex at SPBs. The chain is Nuclear distribution protein nudF from Aspergillus fumigatus (strain CBS 144.89 / FGSC A1163 / CEA10) (Neosartorya fumigata).